A 977-amino-acid chain; its full sequence is Macrophage colony-stimulating factor 1 receptor (977 aa).

The first 18 residues, 1 to 18 (MFFALLFLIGILLGQVQG), serve as a signal peptide directing secretion. The Extracellular portion of the chain corresponds to 19 to 519 (WSEPRIRLSS…MEVSDQIFTS (501 aa)). 5 Ig-like C2-type domains span residues 22–109 (PRIR…VHVF), 120–198 (PSTS…EKVS), 213–305 (PYVY…TQLL), 316–407 (PKLS…ASIT), and 408–513 (FDIK…MEVS). Cysteine 48 and cysteine 92 form a disulfide bridge. N-linked (GlcNAc...) asparagine glycans are attached at residues asparagine 98, asparagine 101, asparagine 154, asparagine 163, asparagine 244, asparagine 286, asparagine 298, asparagine 361, asparagine 424, and asparagine 455. Cystine bridges form between cysteine 138–cysteine 187 and cysteine 234–cysteine 289. Cysteine 430 and cysteine 495 are oxidised to a cystine. The chain crosses the membrane as a helical span at residues 520-540 (AMCGSTVAMVVLGLLLIFMIY). Residues 541–977 (KYKQKPRYEI…LMKPNNYQFC (437 aa)) are Cytoplasmic-facing. Residues 544 to 576 (QKPRYEIRWKIIEATNGNNYTFIDPTQLPYNEK) are regulatory juxtamembrane domain. Tyrosine 563 carries the post-translational modification Phosphotyrosine; by autocatalysis. A Protein kinase domain is found at 584 to 917 (LKLGKTLGAG…KISQMIQRML (334 aa)). ATP contacts are provided by residues 590 to 598 (LGAGAFGKV) and lysine 618. Phosphotyrosine; by autocatalysis is present on residues tyrosine 701 and tyrosine 725. Aspartate 781 functions as the Proton acceptor in the catalytic mechanism. Positions 799–821 (DFGLARDIMNDSNYVVKGNARLP) are activation loop. 2 positions are modified to phosphotyrosine; by autocatalysis: tyrosine 812 and tyrosine 929. The segment at 919–977 (ETSEQQDTQEYKNIPTEAEAEQQLESCDPVKHEDESFETSCDQEEEDQPLMKPNNYQFC) is disordered. Over residues 953–966 (ESFETSCDQEEEDQ) the composition is skewed to acidic residues. Phosphotyrosine; by autocatalysis is present on tyrosine 974.

This sequence belongs to the protein kinase superfamily. Tyr protein kinase family. CSF-1/PDGF receptor subfamily. As to quaternary structure, monomer. Homodimer. Interacts with CSF1. Autophosphorylated in response to CSF1 binding. autophosphorylation, leading to its degradation. Post-translationally, ubiquitinated. Becomes rapidly polyubiquitinated after autophosphorylation, leading to its degradation.

The protein resides in the cell membrane. The catalysed reaction is L-tyrosyl-[protein] + ATP = O-phospho-L-tyrosyl-[protein] + ADP + H(+). With respect to regulation, present in an inactive conformation in the absence of bound ligand. CSF1 binding leads to dimerization and activation by autophosphorylation on tyrosine residues. Functionally, tyrosine-protein kinase that acts as a cell-surface receptor for CSF1 and plays an essential role in the regulation of survival, proliferation and differentiation of hematopoietic precursor cells, especially mononuclear phagocytes, such as macrophages and monocytes. Plays an important role in innate immunity and in inflammatory processes. Plays an important role in the regulation of osteoclast proliferation and differentiation, the regulation of bone resorption, and is required for normal bone development. Promotes reorganization of the actin cytoskeleton, regulates formation of membrane ruffles, cell adhesion and cell migration. Activates several signaling pathways in response to ligand binding. The polypeptide is Macrophage colony-stimulating factor 1 receptor (csf1r) (Danio rerio (Zebrafish)).